We begin with the raw amino-acid sequence, 472 residues long: Uronate isomerase (472 aa).

Belongs to the metallo-dependent hydrolases superfamily. Uronate isomerase family.

It catalyses the reaction D-glucuronate = D-fructuronate. It carries out the reaction aldehydo-D-galacturonate = keto-D-tagaturonate. It functions in the pathway carbohydrate metabolism; pentose and glucuronate interconversion. The sequence is that of Uronate isomerase from Xanthomonas oryzae pv. oryzae (strain MAFF 311018).